The chain runs to 401 residues: S-adenosylmethionine synthase (401 aa).

Position 16 (His-16) interacts with ATP. Position 18 (Asp-18) interacts with Mg(2+). Glu-44 contacts K(+). Positions 57 and 100 each coordinate L-methionine. Residues 100–110 (QSPDIAQGVNE) are flexible loop. Residues 174 to 176 (DAK), 241 to 242 (RF), Asp-250, 256 to 257 (RK), Ala-273, and Lys-277 contribute to the ATP site. Residue Asp-250 coordinates L-methionine. Lys-281 is a binding site for L-methionine.

It belongs to the AdoMet synthase family. In terms of assembly, homotetramer; dimer of dimers. The cofactor is Mg(2+). It depends on K(+) as a cofactor.

The protein resides in the cytoplasm. The catalysed reaction is L-methionine + ATP + H2O = S-adenosyl-L-methionine + phosphate + diphosphate. The protein operates within amino-acid biosynthesis; S-adenosyl-L-methionine biosynthesis; S-adenosyl-L-methionine from L-methionine: step 1/1. Its function is as follows. Catalyzes the formation of S-adenosylmethionine (AdoMet) from methionine and ATP. The overall synthetic reaction is composed of two sequential steps, AdoMet formation and the subsequent tripolyphosphate hydrolysis which occurs prior to release of AdoMet from the enzyme. The sequence is that of S-adenosylmethionine synthase from Streptococcus equi subsp. zooepidemicus (strain MGCS10565).